We begin with the raw amino-acid sequence, 506 residues long: MRGFVILDFGSQFTQLIARRLREMGFYSEIHSFEYPTEEIRKKNPYGIILSGGPNSVYEAGSPQRNVAELRNISPVMGVCYGMQLLTHQLGGKVTRAEHREYGLNYVTWSSPVQGVPERQKVWMSHGDVVEKAPEGFKIIANSDGHHPAAMQGPGVLAVQFHPEVAHTDHGMDLLKYFAQGMCKAPADWDAPHIKDILIKEAQDKVGPTDHVLVGLSGGVDSTVVATLLTKALGAERVHCVFVDNGLLRKNEYEAVLESYHRIGLNVRGVDASEEFLSALQGKSDPEDKRKTIGRVFIEVFDKSYDHKLPIKWLAQGTLYPDVIESVSSVGGSVTIKSHHNVGGLPEKMKLGLVEPVRELFKDEVRALGAQLGLPKEMLWRHPFPGPGLAIRVLGEVTKEKLQILKEADDVYISELRRRGLYEKIWQAFCVLLPVKTVGVQGDSRTYDHVLALRAVTSSDGMTADWYPFEFQFLREVSNLITNKVKGVNRVVYDVTSKPPGTIEWE.

Positions 3–188 (GFVILDFGSQ…AQGMCKAPAD (186 aa)) constitute a Glutamine amidotransferase type-1 domain. The active-site Nucleophile is Cys80. Catalysis depends on residues His162 and Glu164. The GMPS ATP-PPase domain occupies 189-381 (WDAPHIKDIL…LGLPKEMLWR (193 aa)). An ATP-binding site is contributed by 217–223 (SGGVDST).

In terms of assembly, homodimer.

It carries out the reaction XMP + L-glutamine + ATP + H2O = GMP + L-glutamate + AMP + diphosphate + 2 H(+). Its pathway is purine metabolism; GMP biosynthesis; GMP from XMP (L-Gln route): step 1/1. Its function is as follows. Catalyzes the synthesis of GMP from XMP. This chain is GMP synthase [glutamine-hydrolyzing], found in Bdellovibrio bacteriovorus (strain ATCC 15356 / DSM 50701 / NCIMB 9529 / HD100).